The chain runs to 188 residues: dCTP deaminase (188 aa).

DCTP contacts are provided by residues 111-116 (KSTYAR), 135-137 (TLE), glutamine 156, tyrosine 170, and glutamine 180. Glutamate 137 acts as the Proton donor/acceptor in catalysis.

This sequence belongs to the dCTP deaminase family. As to quaternary structure, homotrimer.

The enzyme catalyses dCTP + H2O + H(+) = dUTP + NH4(+). It participates in pyrimidine metabolism; dUMP biosynthesis; dUMP from dCTP (dUTP route): step 1/2. Catalyzes the deamination of dCTP to dUTP. This is dCTP deaminase from Pseudomonas putida (strain ATCC 700007 / DSM 6899 / JCM 31910 / BCRC 17059 / LMG 24140 / F1).